Reading from the N-terminus, the 55-residue chain is Large ribosomal subunit protein bL33 (55 aa).

The protein belongs to the bacterial ribosomal protein bL33 family.

This is Large ribosomal subunit protein bL33 from Roseobacter denitrificans (strain ATCC 33942 / OCh 114) (Erythrobacter sp. (strain OCh 114)).